Consider the following 397-residue polypeptide: Probable peptidoglycan glycosyltransferase FtsW (397 aa).

Residues 1–18 (MSALTLTASKNTQTMTLD) are Cytoplasmic-facing. A helical transmembrane segment spans residues 19–39 (LPLLGSALALAAIGLIMVTSA). Residues 40–58 (SVDFADDANGQALYYMWRH) lie on the Periplasmic side of the membrane. The chain crosses the membrane as a helical span at residues 59 to 79 (LTYLLAGVAVGFVILRLPLEW). Over 80 to 83 (WHKQ) the chain is Cytoplasmic. The chain crosses the membrane as a helical span at residues 84 to 104 (SWLLLVVALGFLVAVLIPGIG). Over 105-112 (RTVNGSTR) the chain is Periplasmic. The chain crosses the membrane as a helical span at residues 113–133 (WISLGVINIQASEIAKVCLAI). Residues 134 to 148 (YTASYLVRRLDEVRG) are Cytoplasmic-facing. Residues 149-169 (SWWGFAKPLLVLMLVALLLLM) form a helical membrane-spanning segment. Topologically, residues 170 to 172 (EPD) are periplasmic. The chain crosses the membrane as a helical span at residues 173–193 (FGALVVTMCAVVGMIFLSGVA). At 194–196 (LSR) the chain is on the cytoplasmic side. A helical membrane pass occupies residues 197-217 (FAALLMFCVGSVALLAVSQPY). The Periplasmic segment spans residues 218–272 (RLKRLTAYTDPWADQFDSGYQLTQALIAFGRGEWSGVGLGNSVQKLFYLPEAHTD). Residues 273-293 (FVFAIIAEELGLLGSLLIIVL) form a helical membrane-spanning segment. Over 294–316 (FGVLLWRGMYVSRVAERAGQLFN) the chain is Cytoplasmic. Residues 317 to 337 (AYAGYGVTLLLGGQALINLGV) traverse the membrane as a helical segment. Topologically, residues 338-348 (NTGLLPTKGLT) are periplasmic. Residues 349–369 (LPLISYGGSSLIISCLCVAIL) form a helical membrane-spanning segment. The Cytoplasmic portion of the chain corresponds to 370-397 (LRIGSEAVSGEQTEDESPKVKNRGGAQR).

It belongs to the SEDS family. FtsW subfamily.

It is found in the cell inner membrane. It catalyses the reaction [GlcNAc-(1-&gt;4)-Mur2Ac(oyl-L-Ala-gamma-D-Glu-L-Lys-D-Ala-D-Ala)](n)-di-trans,octa-cis-undecaprenyl diphosphate + beta-D-GlcNAc-(1-&gt;4)-Mur2Ac(oyl-L-Ala-gamma-D-Glu-L-Lys-D-Ala-D-Ala)-di-trans,octa-cis-undecaprenyl diphosphate = [GlcNAc-(1-&gt;4)-Mur2Ac(oyl-L-Ala-gamma-D-Glu-L-Lys-D-Ala-D-Ala)](n+1)-di-trans,octa-cis-undecaprenyl diphosphate + di-trans,octa-cis-undecaprenyl diphosphate + H(+). It participates in cell wall biogenesis; peptidoglycan biosynthesis. Functionally, peptidoglycan polymerase that is essential for cell division. The chain is Probable peptidoglycan glycosyltransferase FtsW from Hahella chejuensis (strain KCTC 2396).